Here is a 289-residue protein sequence, read N- to C-terminus: NAD kinase (289 aa).

D63 (proton acceptor) is an active-site residue. NAD(+) is bound by residues 63 to 64 (DG), R68, 138 to 139 (ND), R149, D168, 179 to 184 (TGYSLS), and Q238.

This sequence belongs to the NAD kinase family. The cofactor is a divalent metal cation.

It localises to the cytoplasm. The catalysed reaction is NAD(+) + ATP = ADP + NADP(+) + H(+). In terms of biological role, involved in the regulation of the intracellular balance of NAD and NADP, and is a key enzyme in the biosynthesis of NADP. Catalyzes specifically the phosphorylation on 2'-hydroxyl of the adenosine moiety of NAD to yield NADP. The chain is NAD kinase from Gemmatimonas aurantiaca (strain DSM 14586 / JCM 11422 / NBRC 100505 / T-27).